The following is a 371-amino-acid chain: Probable alcohol acetyltransferase (371 aa).

Catalysis depends on charge relay system residues S124 and H295. The interval 325–352 is disordered; it reads AKALEESPKESYSRPPAHQQPLHKNDFT. Residues 327-336 show a composition bias toward basic and acidic residues; it reads ALEESPKESY.

Belongs to the AB hydrolase superfamily.

Its function is as follows. Probable alcohol acetyltransferase that uses acetyl-CoA to synthesize acetate esters from various alcohols. Not involved in the synthesis of ethyl acetate. This Cyberlindnera fabianii (Yeast) protein is Probable alcohol acetyltransferase (EAT2).